A 217-amino-acid polypeptide reads, in one-letter code: Large ribosomal subunit protein uL3 (217 aa).

The interval 129 to 161 (SRGPMSHGSKNHRAPGSTGAGTTPGRIYPGKRM) is disordered. Residues 142–153 (APGSTGAGTTPG) show a composition bias toward low complexity.

This sequence belongs to the universal ribosomal protein uL3 family. Part of the 50S ribosomal subunit. Forms a cluster with proteins L14 and L19.

Functionally, one of the primary rRNA binding proteins, it binds directly near the 3'-end of the 23S rRNA, where it nucleates assembly of the 50S subunit. The protein is Large ribosomal subunit protein uL3 of Prochlorococcus marinus subsp. pastoris (strain CCMP1986 / NIES-2087 / MED4).